Reading from the N-terminus, the 132-residue chain is Small ribosomal subunit protein uS8 (132 aa).

This sequence belongs to the universal ribosomal protein uS8 family. In terms of assembly, part of the 30S ribosomal subunit. Contacts proteins S5 and S12.

In terms of biological role, one of the primary rRNA binding proteins, it binds directly to 16S rRNA central domain where it helps coordinate assembly of the platform of the 30S subunit. The polypeptide is Small ribosomal subunit protein uS8 (Geobacter sp. (strain M21)).